The chain runs to 255 residues: U2 small nuclear ribonucleoprotein A' (255 aa).

LRR repeat units follow at residues 20–41 (RDRE…GATL), 43–64 (QFDA…PLLR), 65–86 (RLKT…LDQA), and 89–110 (CLTE…DPLA). The 39-residue stretch at 123–161 (NPVTNKKHYRLYVIYKVPQVRVLDFQKVKLKERQEAEKM) folds into the LRRCT domain. An N6-acetyllysine; alternate modification is found at K172. K172 participates in a covalent cross-link: Glycyl lysine isopeptide (Lys-Gly) (interchain with G-Cter in SUMO2); alternate. Phosphoserine occurs at positions 178 and 197. The disordered stretch occupies residues 179–199 (KTFNPGAGLPTDKKKGGPSAG). Residue K221 forms a Glycyl lysine isopeptide (Lys-Gly) (interchain with G-Cter in SUMO2) linkage. The disordered stretch occupies residues 222–255 (GLLQSGQIPGRERRSGPSDEGEEEIEDDTVTNGS). 2 positions are modified to phosphoserine: S236 and S255. The span at 240–255 (DEGEEEIEDDTVTNGS) shows a compositional bias: acidic residues.

Belongs to the U2 small nuclear ribonucleoprotein A family. Identified in the spliceosome B complex. Identified in the spliceosome C complex. Found in a pre-mRNA splicing complex with SFRS4, SFRS5, SNRNP70, SNRPA1, SRRM1 and SRRM2. Found in a pre-mRNA exonic splicing enhancer (ESE) complex with SNRNP70, SNRPA1, SRRM1 and TRA2B. Contributes to the binding of stem loop IV of U2 snRNA with SNRPB2.

It localises to the nucleus. In terms of biological role, involved in pre-mRNA splicing as component of the spliceosome. Associated with sn-RNP U2, where it contributes to the binding of stem loop IV of U2 snRNA. This Mus musculus (Mouse) protein is U2 small nuclear ribonucleoprotein A' (Snrpa1).